Consider the following 442-residue polypeptide: Transducin beta-like protein 2 (442 aa).

Positions 36–71 (EKPSQPVCQKENEPKKSGSKKQKQNQRVRKEKPQQH) are disordered. Positions 52–65 (SGSKKQKQNQRVRK) are enriched in basic residues. WD repeat units follow at residues 84–123 (SHSGNISCMDFSSNGKYLATCADDRTVRIWSTKDFLQREH), 130–170 (VELD…DGGF), 182–222 (KHKA…STIN), 224–263 (NQMNNSHAVISPCSRFVGSCGFTPDVKVWEVCFGKKGEFQ), 273–312 (GHSASVHSFAFSNDSRRMASVSKDGTWKLWDTDVEYKKQQ), 323–362 (EEASTMPCRLALSPDTHVLALATGTNIHLFNTRRGEKEEY), and 366–404 (VHGECIADLTFDITGRFLASCGDRAVRLFHNTPGHRAVV). Residue Lys-164 forms a Glycyl lysine isopeptide (Lys-Gly) (interchain with G-Cter in SUMO2) linkage. At Thr-428 the chain carries Phosphothreonine.

The protein is Transducin beta-like protein 2 (Tbl2) of Mus musculus (Mouse).